A 239-amino-acid chain; its full sequence is Transcriptional regulatory protein DcuR (239 aa).

The 119-residue stretch at 3–121 (NVLIIDDDAM…RFEEALTGWR (119 aa)) folds into the Response regulatory domain. At D56 the chain carries 4-aspartylphosphate. The segment at residues 181–200 (TDELANEVNISRVSCRKYLI) is a DNA-binding region (H-T-H motif).

Post-translationally, phosphorylated and activated by DcuS.

The protein localises to the cytoplasm. In terms of biological role, member of the two-component regulatory system DcuR/DcuS. Involved in the C4-dicarboxylate-stimulated regulation of the genes encoding the anaerobic fumarate respiratory system (frdABCD; nuoAN; dcuB; dcuC; sdhCDAB; etc.). Weakly regulates the aerobic C4-dicarboxylate transporter dctA. The polypeptide is Transcriptional regulatory protein DcuR (dcuR) (Escherichia coli O6:H1 (strain CFT073 / ATCC 700928 / UPEC)).